The sequence spans 333 residues: MAVRGSGTLTPFSIQAILNKKEERGGLATPEGRPAPGGTEVAVTAAPAVCCWRIFGETEAGALGGAEDSLLASPARTRTAVGQSAESPGGWDSDSALSEENEGRRRCADVPGASGTGRARVTLGLDQPGCELHAAKDLEEEAPVRSDSEMSASVSGDHSPRGEDDSVSPGGARVPGLRGAAGSGASGGQAGGVEEEEEPAAPKPRKKRSRAAFSHAQVFELERRFNHQRYLSGPERADLAASLKLTETQVKIWFQNRRYKTKRRQMAADLLASAPAAKKVAVKVLVRDDQRQYLPGEVLRPPSLLPLQPSYYYPYYCLPGWALSTCAAAAGTQ.

Disordered stretches follow at residues 74-121 (PART…RARV) and 137-212 (DLEE…SRAA). Positions 137 to 148 (DLEEEAPVRSDS) are enriched in basic and acidic residues. Positions 179–191 (GAAGSGASGGQAG) are enriched in gly residues. The homeobox DNA-binding region spans 206 to 265 (KKRSRAAFSHAQVFELERRFNHQRYLSGPERADLAASLKLTETQVKIWFQNRRYKTKRRQ).

The protein belongs to the NK-3 homeobox family. In terms of tissue distribution, expressed widely in mesoderm at the gastroduodenal junction (at protein level). Expressed in visceral mesoderm and embryonic skeleton. Expression is restricted to immature proliferative chondrocytes during endochondral ossification.

The protein localises to the nucleus. Its function is as follows. Transcriptional repressor that acts as a negative regulator of chondrocyte maturation. PLays a role in distal stomach development; required for proper antral-pyloric morphogenesis and development of antral-type epithelium. In concert with GSC, defines the structural components of the middle ear; required for tympanic ring and gonium development and in the regulation of the width of the malleus. The polypeptide is Homeobox protein Nkx-3.2 (Nkx3-2) (Mus musculus (Mouse)).